Reading from the N-terminus, the 316-residue chain is Small ribosomal subunit biogenesis GTPase RsgA (316 aa).

The region spanning 83–248 (DQYKSKLFAA…LIDSPGFQEF (166 aa)) is the CP-type G domain. GTP-binding positions include 131–134 (NKTD) and 185–193 (GQSGMGKST). Residues Cys272, Cys277, His279, and Cys285 each coordinate Zn(2+).

It belongs to the TRAFAC class YlqF/YawG GTPase family. RsgA subfamily. Monomer. Associates with 30S ribosomal subunit, binds 16S rRNA. Zn(2+) is required as a cofactor.

It localises to the cytoplasm. Its function is as follows. One of several proteins that assist in the late maturation steps of the functional core of the 30S ribosomal subunit. Helps release RbfA from mature subunits. May play a role in the assembly of ribosomal proteins into the subunit. Circularly permuted GTPase that catalyzes slow GTP hydrolysis, GTPase activity is stimulated by the 30S ribosomal subunit. The protein is Small ribosomal subunit biogenesis GTPase RsgA of Paraburkholderia xenovorans (strain LB400).